Consider the following 152-residue polypeptide: Ribosomal RNA large subunit methyltransferase H (152 aa).

Residues L71, G101, and 120–125 each bind S-adenosyl-L-methionine; that span reads LSKLTF.

It belongs to the RNA methyltransferase RlmH family. Homodimer.

It localises to the cytoplasm. It carries out the reaction pseudouridine(1915) in 23S rRNA + S-adenosyl-L-methionine = N(3)-methylpseudouridine(1915) in 23S rRNA + S-adenosyl-L-homocysteine + H(+). Its function is as follows. Specifically methylates the pseudouridine at position 1915 (m3Psi1915) in 23S rRNA. The polypeptide is Ribosomal RNA large subunit methyltransferase H (Thermosipho melanesiensis (strain DSM 12029 / CIP 104789 / BI429)).